The chain runs to 197 residues: 3-isopropylmalate dehydratase small subunit (197 aa).

The protein belongs to the LeuD family. LeuD type 1 subfamily. Heterodimer of LeuC and LeuD.

It catalyses the reaction (2R,3S)-3-isopropylmalate = (2S)-2-isopropylmalate. It functions in the pathway amino-acid biosynthesis; L-leucine biosynthesis; L-leucine from 3-methyl-2-oxobutanoate: step 2/4. Functionally, catalyzes the isomerization between 2-isopropylmalate and 3-isopropylmalate, via the formation of 2-isopropylmaleate. In Azobacteroides pseudotrichonymphae genomovar. CFP2, this protein is 3-isopropylmalate dehydratase small subunit.